The chain runs to 135 residues: 6-pyruvoyl tetrahydrobiopterin synthase (135 aa).

His17 provides a ligand contact to Zn(2+). Cys36 functions as the Proton acceptor in the catalytic mechanism. His40 and His42 together coordinate Zn(2+). Catalysis depends on charge relay system residues His81 and Glu124.

The protein belongs to the PTPS family. As to quaternary structure, homohexamer formed of two homotrimers in a head to head fashion. The cofactor is Zn(2+).

The enzyme catalyses 7,8-dihydroneopterin 3'-triphosphate = 6-pyruvoyl-5,6,7,8-tetrahydropterin + triphosphate + H(+). It participates in cofactor biosynthesis; tetrahydrobiopterin biosynthesis; tetrahydrobiopterin from 7,8-dihydroneopterin triphosphate: step 1/3. In terms of biological role, involved in the biosynthesis of tetrahydrobiopterin, an essential cofactor of aromatic amino acid hydroxylases. Catalyzes the transformation of 7,8-dihydroneopterin triphosphate into 6-pyruvoyl tetrahydropterin. In Dictyostelium discoideum (Social amoeba), this protein is 6-pyruvoyl tetrahydrobiopterin synthase (ptsA).